Consider the following 347-residue polypeptide: MSATSIQPLLDILFQGKALTREQTASLFSTLIQGEMNEAVMAGMLMALKIRGETIAEISGAADAMRAAAKPFPYPSSMRTEGIIDIVGTGGDGFNTINISTTAAFVAAAAGAKVAKHGNRSVSSKSGSSDLLAQFGIDLTMSPELASRCLESLNLCFLFAPHYHGGVKHAVPVRQALKTRTIFNVLGPLINPARPEFMLLGVYSPELVTPIARVLQALGTQRAMVVHGSGLDEVALHGSTQVAELKDGEIIEYQLTPADFGVPQAQMSELEGGEPAQNAQITQSILQGQGSDAHTHAVAINAGCALYLCGLSDSVKAGTALALNTIKSGKAFELLNQLAKVSSEAQE.

5-phospho-alpha-D-ribose 1-diphosphate contacts are provided by residues G88, 91-92, T96, 98-101, 116-124, and S128; these read GD, NIST, and KHGNRSVSS. G88 contributes to the anthranilate binding site. Position 100 (S100) interacts with Mg(2+). N119 provides a ligand contact to anthranilate. R174 is an anthranilate binding site. 2 residues coordinate Mg(2+): D232 and E233.

Belongs to the anthranilate phosphoribosyltransferase family. In terms of assembly, homodimer. Requires Mg(2+) as cofactor.

It carries out the reaction N-(5-phospho-beta-D-ribosyl)anthranilate + diphosphate = 5-phospho-alpha-D-ribose 1-diphosphate + anthranilate. The protein operates within amino-acid biosynthesis; L-tryptophan biosynthesis; L-tryptophan from chorismate: step 2/5. In terms of biological role, catalyzes the transfer of the phosphoribosyl group of 5-phosphorylribose-1-pyrophosphate (PRPP) to anthranilate to yield N-(5'-phosphoribosyl)-anthranilate (PRA). The protein is Anthranilate phosphoribosyltransferase of Shewanella sp. (strain MR-4).